A 623-amino-acid polypeptide reads, in one-letter code: Indolepyruvate oxidoreductase subunit IorA (623 aa).

Cys573, Cys576, Cys579, Cys585, Cys602, Cys605, Cys608, and Cys612 together coordinate [4Fe-4S] cluster. One can recognise a 4Fe-4S ferredoxin-type domain in the interval 593–622; sequence EKVSIDQSLCVGCAVCAKICPNRAIKPAKS.

Heterodimer of the IorA and IorB subunits. [4Fe-4S] cluster serves as cofactor.

It catalyses the reaction indole-3-pyruvate + 2 oxidized [2Fe-2S]-[ferredoxin] + CoA = (indol-3-yl)acetyl-CoA + 2 reduced [2Fe-2S]-[ferredoxin] + CO2 + H(+). Its function is as follows. Catalyzes the ferredoxin-dependent oxidative decarboxylation of arylpyruvates. This chain is Indolepyruvate oxidoreductase subunit IorA (iorA), found in Archaeoglobus fulgidus (strain ATCC 49558 / DSM 4304 / JCM 9628 / NBRC 100126 / VC-16).